Consider the following 690-residue polypeptide: Glycine--tRNA ligase beta subunit (690 aa).

Belongs to the class-II aminoacyl-tRNA synthetase family. As to quaternary structure, tetramer of two alpha and two beta subunits.

It is found in the cytoplasm. The catalysed reaction is tRNA(Gly) + glycine + ATP = glycyl-tRNA(Gly) + AMP + diphosphate. The sequence is that of Glycine--tRNA ligase beta subunit from Desulfitobacterium hafniense (strain Y51).